The primary structure comprises 233 residues: Glycerol-3-phosphate acyltransferase (233 aa).

Helical transmembrane passes span 7-27 (WIII…GYII), 94-114 (ISIV…YIGF), 127-147 (VIAI…IVAF), 153-173 (SIGS…GVLI), and 185-205 (ISYE…LLII).

It belongs to the PlsY family. As to quaternary structure, probably interacts with PlsX.

It is found in the cell membrane. It catalyses the reaction an acyl phosphate + sn-glycerol 3-phosphate = a 1-acyl-sn-glycero-3-phosphate + phosphate. The protein operates within lipid metabolism; phospholipid metabolism. Its function is as follows. Catalyzes the transfer of an acyl group from acyl-phosphate (acyl-PO(4)) to glycerol-3-phosphate (G3P) to form lysophosphatidic acid (LPA). This enzyme utilizes acyl-phosphate as fatty acyl donor, but not acyl-CoA or acyl-ACP. This is Glycerol-3-phosphate acyltransferase from Acholeplasma laidlawii.